We begin with the raw amino-acid sequence, 264 residues long: Ribonuclease HII (264 aa).

Positions 33–224 constitute an RNase H type-2 domain; the sequence is GPVAGVDEVG…VRRVASGSNT (192 aa). The a divalent metal cation site is built by aspartate 39, glutamate 40, and aspartate 133. Residues 222–264 form a disordered region; that stretch reads SNTAEVADGQPDPRDGTAQTGEGRWSKSSHPATMRATGRAQGT.

Belongs to the RNase HII family. It depends on Mn(2+) as a cofactor. Requires Mg(2+) as cofactor.

It localises to the cytoplasm. The enzyme catalyses Endonucleolytic cleavage to 5'-phosphomonoester.. Endonuclease that specifically degrades the RNA of RNA-DNA hybrids. In Mycobacterium bovis (strain ATCC BAA-935 / AF2122/97), this protein is Ribonuclease HII.